We begin with the raw amino-acid sequence, 410 residues long: Na(+)/H(+) antiporter NhaA 1/4 (410 aa).

A run of 11 helical transmembrane segments spans residues 16–36 (VGGSLLIGAAVIALIWANSPL), 55–75 (LNLSVETWAADGLLAVFFFIV), 95–115 (ALPIAAALGGVAVPALVFLAF), 125–145 (GGWGIPMATGIAFAVAVLAVV), 156–176 (FLLTLATVDDMSAVLVIAVAC), 178–198 (SGINFTALALAAVGLAVFGYL), 215–235 (AWLLFVPLAAVVWALMHACGV), 275–295 (IALPLFALMSAGVSLAGAGGF), 299–319 (AITWNVLAGLLVGKVVGIFGG), 340–360 (IAGIAVLGGIGFTVSLPIAEL), and 371–391 (AKGAILLASTTAALLAALLLG).

This sequence belongs to the NhaA Na(+)/H(+) (TC 2.A.33) antiporter family.

The protein resides in the cell membrane. It catalyses the reaction Na(+)(in) + 2 H(+)(out) = Na(+)(out) + 2 H(+)(in). Its function is as follows. Na(+)/H(+) antiporter that extrudes sodium in exchange for external protons. This is Na(+)/H(+) antiporter NhaA 1/4 from Streptomyces coelicolor (strain ATCC BAA-471 / A3(2) / M145).